A 336-amino-acid polypeptide reads, in one-letter code: Dihydroorotate dehydrogenase (quinone) (336 aa).

FMN contacts are provided by residues 62 to 66 (AGLDK) and T86. Substrate is bound at residue K66. 111-115 (NRMGF) lines the substrate pocket. Residues N139 and N172 each contribute to the FMN site. N172 contacts substrate. S175 functions as the Nucleophile in the catalytic mechanism. A substrate-binding site is contributed by N177. Positions 217 and 245 each coordinate FMN. 246-247 (NT) is a binding site for substrate. FMN-binding positions include G268, G297, and 318-319 (YS).

This sequence belongs to the dihydroorotate dehydrogenase family. Type 2 subfamily. Monomer. Requires FMN as cofactor.

The protein resides in the cell membrane. The catalysed reaction is (S)-dihydroorotate + a quinone = orotate + a quinol. The protein operates within pyrimidine metabolism; UMP biosynthesis via de novo pathway; orotate from (S)-dihydroorotate (quinone route): step 1/1. Functionally, catalyzes the conversion of dihydroorotate to orotate with quinone as electron acceptor. This chain is Dihydroorotate dehydrogenase (quinone), found in Citrobacter koseri (strain ATCC BAA-895 / CDC 4225-83 / SGSC4696).